A 343-amino-acid polypeptide reads, in one-letter code: Holliday junction branch migration complex subunit RuvB (343 aa).

The segment at 4–184 (SDRLISAKAG…FGIVQRLEFY (181 aa)) is large ATPase domain (RuvB-L). Residues Ile-23, Arg-24, Gly-65, Lys-68, Thr-69, Thr-70, 131-133 (EDY), Arg-174, Tyr-184, and Arg-221 each bind ATP. Thr-69 contacts Mg(2+). The tract at residues 185 to 255 (NHQDLTHIIT…IADQALNMLK (71 aa)) is small ATPAse domain (RuvB-S). Residues 258–343 (SQGFDHMDRR…RSGREDDLFE (86 aa)) are head domain (RuvB-H). Residues Arg-294, Arg-313, and Arg-318 each contribute to the DNA site.

It belongs to the RuvB family. Homohexamer. Forms an RuvA(8)-RuvB(12)-Holliday junction (HJ) complex. HJ DNA is sandwiched between 2 RuvA tetramers; dsDNA enters through RuvA and exits via RuvB. An RuvB hexamer assembles on each DNA strand where it exits the tetramer. Each RuvB hexamer is contacted by two RuvA subunits (via domain III) on 2 adjacent RuvB subunits; this complex drives branch migration. In the full resolvosome a probable DNA-RuvA(4)-RuvB(12)-RuvC(2) complex forms which resolves the HJ.

The protein resides in the cytoplasm. The enzyme catalyses ATP + H2O = ADP + phosphate + H(+). The RuvA-RuvB-RuvC complex processes Holliday junction (HJ) DNA during genetic recombination and DNA repair, while the RuvA-RuvB complex plays an important role in the rescue of blocked DNA replication forks via replication fork reversal (RFR). RuvA specifically binds to HJ cruciform DNA, conferring on it an open structure. The RuvB hexamer acts as an ATP-dependent pump, pulling dsDNA into and through the RuvAB complex. RuvB forms 2 homohexamers on either side of HJ DNA bound by 1 or 2 RuvA tetramers; 4 subunits per hexamer contact DNA at a time. Coordinated motions by a converter formed by DNA-disengaged RuvB subunits stimulates ATP hydrolysis and nucleotide exchange. Immobilization of the converter enables RuvB to convert the ATP-contained energy into a lever motion, pulling 2 nucleotides of DNA out of the RuvA tetramer per ATP hydrolyzed, thus driving DNA branch migration. The RuvB motors rotate together with the DNA substrate, which together with the progressing nucleotide cycle form the mechanistic basis for DNA recombination by continuous HJ branch migration. Branch migration allows RuvC to scan DNA until it finds its consensus sequence, where it cleaves and resolves cruciform DNA. The chain is Holliday junction branch migration complex subunit RuvB from Marinobacter nauticus (strain ATCC 700491 / DSM 11845 / VT8) (Marinobacter aquaeolei).